Consider the following 447-residue polypeptide: GTPase Der (447 aa).

EngA-type G domains are found at residues 3-167 and 181-354; these read PVIA…VQER and VKIA…AAAM. GTP is bound by residues 9–16, 56–60, 119–122, 187–194, 234–238, and 299–302; these read GRPNVGKS, DTGGF, NKAE, DTAGL, and NKWD. A KH-like domain is found at 355-439; the sequence is VKLPTPQLTR…PLRIEFRTNK (85 aa).

It belongs to the TRAFAC class TrmE-Era-EngA-EngB-Septin-like GTPase superfamily. EngA (Der) GTPase family. In terms of assembly, associates with the 50S ribosomal subunit.

In terms of biological role, GTPase that plays an essential role in the late steps of ribosome biogenesis. In Cupriavidus taiwanensis (strain DSM 17343 / BCRC 17206 / CCUG 44338 / CIP 107171 / LMG 19424 / R1) (Ralstonia taiwanensis (strain LMG 19424)), this protein is GTPase Der.